A 274-amino-acid polypeptide reads, in one-letter code: Anamorsin homolog (274 aa).

The segment at 1–154 (MDRTRKQCSV…KKPSWKIGSS (154 aa)) is N-terminal SAM-like domain. The segment at 154 to 185 (SFALKKSTKGSVKVNLDDDLIDEDSLLTEEDM) is linker. Residues C196, C205, C208, and C210 each contribute to the [2Fe-2S] cluster site. Residues 196-210 (CEVGSTRKACKNCTC) form a fe-S binding site A region. Positions 235, 238, 246, and 249 each coordinate [4Fe-4S] cluster. 2 consecutive short sequence motifs (cx2C motif) follow at residues 235-238 (CGSC) and 246-249 (CSTC). The interval 235-249 (CGSCGLGDAFRCSTC) is fe-S binding site B.

The protein belongs to the anamorsin family. In terms of assembly, monomer. [2Fe-2S] cluster is required as a cofactor. The cofactor is [4Fe-4S] cluster.

The protein resides in the cytoplasm. Its subcellular location is the mitochondrion intermembrane space. In terms of biological role, component of the cytosolic iron-sulfur (Fe-S) protein assembly (CIA) machinery. Required for the maturation of extramitochondrial Fe-S proteins. Part of an electron transfer chain functioning in an early step of cytosolic Fe-S biogenesis, facilitating the de novo assembly of a [4Fe-4S] cluster on the cytosolic Fe-S scaffold complex. Electrons are transferred from NADPH via a FAD- and FMN-containing diflavin oxidoreductase. Together with the diflavin oxidoreductase, also required for the assembly of the diferric tyrosyl radical cofactor of ribonucleotide reductase (RNR), probably by providing electrons for reduction during radical cofactor maturation in the catalytic small subunit. This chain is Anamorsin homolog, found in Ricinus communis (Castor bean).